We begin with the raw amino-acid sequence, 166 residues long: Large ribosomal subunit protein uL10 (166 aa).

It belongs to the universal ribosomal protein uL10 family. Part of the ribosomal stalk of the 50S ribosomal subunit. The N-terminus interacts with L11 and the large rRNA to form the base of the stalk. The C-terminus forms an elongated spine to which L12 dimers bind in a sequential fashion forming a multimeric L10(L12)X complex.

Forms part of the ribosomal stalk, playing a central role in the interaction of the ribosome with GTP-bound translation factors. The chain is Large ribosomal subunit protein uL10 (rplJ) from Streptococcus pyogenes serotype M1.